Consider the following 148-residue polypeptide: Nodulation protein NolJ (148 aa).

The segment covering 66-78 (ADEAMEETEEDAD) has biased composition (acidic residues). Disordered regions lie at residues 66–93 (ADEAMEETEEDADALGGPRQEVRAVSDG) and 124–148 (AAKGAGAAVPGPNRRTGSGERRGYG). Low complexity predominate over residues 124 to 136 (AAKGAGAAVPGPN).

Involved in efficiency of soybean nodulation and in nodulation delay. The polypeptide is Nodulation protein NolJ (nolJ) (Rhizobium fredii (Sinorhizobium fredii)).